Reading from the N-terminus, the 357-residue chain is RNA-binding protein 4B (357 aa).

RRM domains follow at residues 2–72 and 78–148; these read VKLF…ASKN and TKLH…LSTS. Residues 160 to 177 form a CCHC-type zinc finger; sequence SGCYRCGKEGHWSKECPV. The interval 196–357 is interaction with TNPO3; sequence AVRTPYTMGY…YVDRTRYSAF (162 aa).

In terms of assembly, interacts with TNPO3, which may mediate nuclear import of the protein. Expressed in the suprachiasmatic nucleus (SCN) (at protein level). Expressed in the suprachiasmatic nucleus (SCN).

The protein localises to the nucleus. It is found in the nucleolus. Functionally, required for the translational activation of PER1 mRNA in response to circadian clock. Binds directly to the 3'-UTR of the PER1 mRNA. The chain is RNA-binding protein 4B (Rbm4b) from Mus musculus (Mouse).